The primary structure comprises 238 residues: Flagellar L-ring protein (238 aa).

The signal sequence occupies residues 1–16 (MNKAILAVAMVLLLAG). Residue cysteine 17 is the site of N-palmitoyl cysteine attachment. The S-diacylglycerol cysteine moiety is linked to residue cysteine 17.

It belongs to the FlgH family. In terms of assembly, the basal body constitutes a major portion of the flagellar organelle and consists of four rings (L,P,S, and M) mounted on a central rod.

It localises to the cell outer membrane. The protein localises to the bacterial flagellum basal body. Functionally, assembles around the rod to form the L-ring and probably protects the motor/basal body from shearing forces during rotation. The polypeptide is Flagellar L-ring protein (Brucella canis (strain ATCC 23365 / NCTC 10854 / RM-666)).